A 253-amino-acid polypeptide reads, in one-letter code: Testis-expressed protein 47 (253 aa).

Testis-specific.

The sequence is that of Testis-expressed protein 47 from Homo sapiens (Human).